The sequence spans 364 residues: UDP-N-acetylglucosamine--N-acetylmuramyl-(pentapeptide) pyrophosphoryl-undecaprenol N-acetylglucosamine transferase 1 (364 aa).

Residues 10-12 (TGG), N124, S195, I250, and Q295 each bind UDP-N-acetyl-alpha-D-glucosamine.

The protein belongs to the glycosyltransferase 28 family. MurG subfamily.

It localises to the cell membrane. The catalysed reaction is di-trans,octa-cis-undecaprenyl diphospho-N-acetyl-alpha-D-muramoyl-L-alanyl-D-glutamyl-meso-2,6-diaminopimeloyl-D-alanyl-D-alanine + UDP-N-acetyl-alpha-D-glucosamine = di-trans,octa-cis-undecaprenyl diphospho-[N-acetyl-alpha-D-glucosaminyl-(1-&gt;4)]-N-acetyl-alpha-D-muramoyl-L-alanyl-D-glutamyl-meso-2,6-diaminopimeloyl-D-alanyl-D-alanine + UDP + H(+). It participates in cell wall biogenesis; peptidoglycan biosynthesis. In terms of biological role, cell wall formation. Catalyzes the transfer of a GlcNAc subunit on undecaprenyl-pyrophosphoryl-MurNAc-pentapeptide (lipid intermediate I) to form undecaprenyl-pyrophosphoryl-MurNAc-(pentapeptide)GlcNAc (lipid intermediate II). The protein is UDP-N-acetylglucosamine--N-acetylmuramyl-(pentapeptide) pyrophosphoryl-undecaprenol N-acetylglucosamine transferase 1 of Bacillus cereus (strain ATCC 10987 / NRS 248).